Reading from the N-terminus, the 173-residue chain is DNA-directed RNA polymerase subunit delta (173 aa).

The 68-residue stretch at 14-81 folds into the HTH HARE-type domain; that stretch reads MALVEIAHEL…SDQTWGLRSW (68 aa). A disordered region spans residues 110-173; it reads LDLDEFEEID…DYDDEEEEIK (64 aa).

This sequence belongs to the RpoE family. RNAP is composed of a core of 2 alpha, a beta and a beta' subunit. The core is associated with a delta subunit, and at least one of epsilon or omega. When a sigma factor is associated with the core the holoenzyme is formed, which can initiate transcription.

Participates in both the initiation and recycling phases of transcription. In the presence of the delta subunit, RNAP displays an increased specificity of transcription, a decreased affinity for nucleic acids, and an increased efficiency of RNA synthesis because of enhanced recycling. May function in sigma factor switching. It displaces RNA bound to RNA polymerase in a binary complex. In Bacillus subtilis (strain 168), this protein is DNA-directed RNA polymerase subunit delta.